The sequence spans 383 residues: Sphingosine kinase 1 (383 aa).

One can recognise a DAGKc domain in the interval 12–159 (PRPCRVLVLL…MNLLSLHTAS (148 aa)). Residues 22–24 (NPR) and 54–58 (TERQN) each bind ATP. 79-82 (SGDG) contributes to the substrate binding site. Aspartate 81 acts as the Proton donor/acceptor in catalysis. ATP contacts are provided by residues glutamate 86 and 111 to 113 (GSG). 2 short sequence motifs (nuclear export signal) span residues 147 to 155 (LSPMNLLSL) and 161 to 169 (RQLYSVLSL). Aspartate 178 serves as a coordination point for substrate. Arginine 185 and arginine 191 together coordinate ATP. Threonine 193 bears the Phosphothreonine mark. A Phosphoserine modification is found at serine 225. 340–342 (DGE) lines the ATP pocket. The interval 363 to 383 (GSSDSPSGRDSQRRPPPEEPI) is disordered. Residues 372–383 (DSQRRPPPEEPI) are compositionally biased toward basic and acidic residues.

As to quaternary structure, interacts with ACY1. Binds to calmodulin. Interacts with SPHKAP. Interacts with CIB1, the interaction occurs in a calcium-dependent manner. Interacts with TRAF2. Interacts with EEF1A1; the interaction enhances SPHK1 kinase activity. Mg(2+) is required as a cofactor. In terms of tissue distribution, expressed in microglia (at protein level).

It is found in the cytoplasm. The protein localises to the nucleus. Its subcellular location is the cell membrane. The protein resides in the endosome membrane. It localises to the membrane. It is found in the clathrin-coated pit. The protein localises to the synapse. The enzyme catalyses a sphingoid base + ATP = a sphingoid 1-phosphate + ADP + H(+). It carries out the reaction L-seryl-[protein] + acetyl-CoA = O-acetyl-L-seryl-[protein] + CoA. It catalyses the reaction sphinganine + ATP = sphinganine 1-phosphate + ADP + H(+). The catalysed reaction is sphing-4-enine + ATP = sphing-4-enine 1-phosphate + ADP + H(+). The enzyme catalyses 1-O-hexadecyl-2-amino-sn-glycerol + ATP = 1-O-hexadecyl-2-desoxy-2-amino-sn-glycero-3-phosphate + ADP + H(+). Acetyltransferase activity increases in presence of the kinase substrate, sphingosine. In Purkinje cells, kinase activity on sphingosine increases in presence of VEGFA. In neurons, kinase activity increases during the first 24h in presence of Amyloid-beta protein 42 to decrease after 96h. Functionally, catalyzes the phosphorylation of sphingosine to form sphingosine 1-phosphate (SPP), a lipid mediator with both intra- and extracellular functions. Also acts on D-erythro-sphingosine and to a lesser extent sphinganine, but not other lipids, such as D,L-threo-dihydrosphingosine, N,N-dimethylsphingosine, diacylglycerol, ceramide, or phosphatidylinositol. In contrast to proapoptotic SPHK2, has a negative effect on intracellular ceramide levels, enhances cell growth and inhibits apoptosis. Involved in the regulation of inflammatory response and neuroinflammation. Via the product sphingosine 1-phosphate, stimulates TRAF2 E3 ubiquitin ligase activity, and promotes activation of NF-kappa-B in response to TNF signaling leading to IL17 secretion. In response to TNF and in parallel to NF-kappa-B activation, negatively regulates RANTES induction through p38 MAPK signaling pathway. Involved in endocytic membrane trafficking induced by sphingosine, recruited to dilate endosomes, also plays a role on later stages of endosomal maturation and membrane fusion independently of its kinase activity. In Purkinje cells, seems to be also involved in the regulation of autophagosome-lysosome fusion upon VEGFA. Has serine acetyltransferase activity on PTGS2/COX2 in an acetyl-CoA dependent manner. The acetyltransferase activity increases in presence of the kinase substrate, sphingosine. During neuroinflammation, through PTGS2 acetylation, promotes neuronal secretion of specialized preresolving mediators (SPMs), especially 15-R-lipoxin A4, which results in an increase of phagocytic microglia. The chain is Sphingosine kinase 1 (Sphk1) from Rattus norvegicus (Rat).